A 375-amino-acid polypeptide reads, in one-letter code: tRNA-specific 2-thiouridylase MnmA (375 aa).

Residues 12–19 (GMSGGVDS) and M38 contribute to the ATP site. The segment at 98–100 (NPD) is interaction with target base in tRNA. The Nucleophile role is filled by C103. C103 and C200 are joined by a disulfide. Residue G127 coordinates ATP. Residues 150–152 (KDQ) form an interaction with tRNA region. Residue C200 is the Cysteine persulfide intermediate of the active site. Residues 312–313 (RY) form an interaction with tRNA region.

The protein belongs to the MnmA/TRMU family.

The protein localises to the cytoplasm. It carries out the reaction S-sulfanyl-L-cysteinyl-[protein] + uridine(34) in tRNA + AH2 + ATP = 2-thiouridine(34) in tRNA + L-cysteinyl-[protein] + A + AMP + diphosphate + H(+). Catalyzes the 2-thiolation of uridine at the wobble position (U34) of tRNA, leading to the formation of s(2)U34. The sequence is that of tRNA-specific 2-thiouridylase MnmA from Lactobacillus gasseri (strain ATCC 33323 / DSM 20243 / BCRC 14619 / CIP 102991 / JCM 1131 / KCTC 3163 / NCIMB 11718 / NCTC 13722 / AM63).